We begin with the raw amino-acid sequence, 267 residues long: UDP-glucose:undecaprenyl-phosphate glucose-1-phosphate transferase (267 aa).

A helical membrane pass occupies residues 83 to 103; that stretch reads VAAALLTALFAPLLLLAALAI.

This sequence belongs to the bacterial sugar transferase family.

It is found in the cell membrane. The catalysed reaction is di-trans,octa-cis-undecaprenyl phosphate + UDP-alpha-D-glucose = alpha-D-glucosyl di-trans,octa-cis-undecaprenyl diphosphate + UMP. Functionally, is likely the initiating enzyme for holdfast polysaccharide synthesis. Catalyzes the transfer of the glucose-1-phosphate moiety from UDP-Glc onto the carrier lipid undecaprenyl phosphate (C55-P), forming a phosphoanhydride bond yielding to glucosyl-pyrophosphoryl-undecaprenol (Glc-PP-C55). Also possesses a weak galactose-1-P transferase activity. This is UDP-glucose:undecaprenyl-phosphate glucose-1-phosphate transferase (pssY) from Caulobacter vibrioides (strain ATCC 19089 / CIP 103742 / CB 15) (Caulobacter crescentus).